A 273-amino-acid chain; its full sequence is 2,3,4,5-tetrahydropyridine-2,6-dicarboxylate N-succinyltransferase (273 aa).

2 residues coordinate substrate: arginine 105 and aspartate 142.

This sequence belongs to the transferase hexapeptide repeat family. Homotrimer.

The protein localises to the cytoplasm. The catalysed reaction is (S)-2,3,4,5-tetrahydrodipicolinate + succinyl-CoA + H2O = (S)-2-succinylamino-6-oxoheptanedioate + CoA. Its pathway is amino-acid biosynthesis; L-lysine biosynthesis via DAP pathway; LL-2,6-diaminopimelate from (S)-tetrahydrodipicolinate (succinylase route): step 1/3. This chain is 2,3,4,5-tetrahydropyridine-2,6-dicarboxylate N-succinyltransferase, found in Bordetella avium (strain 197N).